A 410-amino-acid chain; its full sequence is Lipoyl synthase, mitochondrial (410 aa).

The transit peptide at 1 to 29 (MASTTVCSAARIRVASSQVLRSIANTRTY) directs the protein to the mitochondrion. Residues 29–39 (YATTSPESSIP) are compositionally biased toward polar residues. The tract at residues 29–49 (YATTSPESSIPETKPTAKRTP) is disordered. Positions 129, 134, 140, 160, 164, 167, and 375 each coordinate [4Fe-4S] cluster. The Radical SAM core domain occupies 143 to 364 (GGSKAAATAT…KEKAMEMGFL (222 aa)).

It belongs to the radical SAM superfamily. Lipoyl synthase family. It depends on [4Fe-4S] cluster as a cofactor.

Its subcellular location is the mitochondrion. The catalysed reaction is [[Fe-S] cluster scaffold protein carrying a second [4Fe-4S](2+) cluster] + N(6)-octanoyl-L-lysyl-[protein] + 2 oxidized [2Fe-2S]-[ferredoxin] + 2 S-adenosyl-L-methionine + 4 H(+) = [[Fe-S] cluster scaffold protein] + N(6)-[(R)-dihydrolipoyl]-L-lysyl-[protein] + 4 Fe(3+) + 2 hydrogen sulfide + 2 5'-deoxyadenosine + 2 L-methionine + 2 reduced [2Fe-2S]-[ferredoxin]. The protein operates within protein modification; protein lipoylation via endogenous pathway; protein N(6)-(lipoyl)lysine from octanoyl-[acyl-carrier-protein]: step 2/2. In terms of biological role, catalyzes the radical-mediated insertion of two sulfur atoms into the C-6 and C-8 positions of the octanoyl moiety bound to the lipoyl domains of lipoate-dependent enzymes, thereby converting the octanoylated domains into lipoylated derivatives. The sequence is that of Lipoyl synthase, mitochondrial from Arthroderma otae (strain ATCC MYA-4605 / CBS 113480) (Microsporum canis).